Reading from the N-terminus, the 252-residue chain is N-acetylglucosaminyl-phosphatidylinositol de-N-acetylase (252 aa).

The chain crosses the membrane as a helical span at residues 2-22 (EVVGLLCVAVAVLTWGFLRVW). Over 23–252 (NSAERMRSPE…YMSVNSLQLL (230 aa)) the chain is Cytoplasmic.

Belongs to the PIGL family.

It localises to the endoplasmic reticulum membrane. The enzyme catalyses a 6-(N-acetyl-alpha-D-glucosaminyl)-1-(1,2-diacyl-sn-glycero-3-phospho)-1D-myo-inositol + H2O = a 6-(alpha-D-glucosaminyl)-1-(1,2-diacyl-sn-glycero-3-phospho)-1D-myo-inositol + acetate. It functions in the pathway glycolipid biosynthesis; glycosylphosphatidylinositol-anchor biosynthesis. Functionally, catalyzes the second step of glycosylphosphatidylinositol (GPI) biosynthesis, which is the de-N-acetylation of N-acetylglucosaminyl-phosphatidylinositol. This is N-acetylglucosaminyl-phosphatidylinositol de-N-acetylase (Pigl) from Rattus norvegicus (Rat).